The following is an 87-amino-acid chain: uncharacterized protein (87 aa).

The helical transmembrane segment at leucine 13–isoleucine 33 threads the bilayer. Residues glutamate 66 to valine 87 form a disordered region. Over residues lysine 78 to valine 87 the composition is skewed to basic residues.

The protein resides in the membrane. This is an uncharacterized protein from Caenorhabditis elegans.